Here is a 654-residue protein sequence, read N- to C-terminus: tRNA 5-methylaminomethyl-2-thiouridine biosynthesis bifunctional protein MnmC (654 aa).

Positions 1-236 (MSTLLQHAQI…KWEVMHGVYT (236 aa)) are tRNA (mnm(5)s(2)U34)-methyltransferase. The interval 262 to 654 (IGAGLAGSAT…FALRRLIRGK (393 aa)) is FAD-dependent cmnm(5)s(2)U34 oxidoreductase.

In the N-terminal section; belongs to the methyltransferase superfamily. tRNA (mnm(5)s(2)U34)-methyltransferase family. The protein in the C-terminal section; belongs to the DAO family. Requires FAD as cofactor.

The protein resides in the cytoplasm. It carries out the reaction 5-aminomethyl-2-thiouridine(34) in tRNA + S-adenosyl-L-methionine = 5-methylaminomethyl-2-thiouridine(34) in tRNA + S-adenosyl-L-homocysteine + H(+). Functionally, catalyzes the last two steps in the biosynthesis of 5-methylaminomethyl-2-thiouridine (mnm(5)s(2)U) at the wobble position (U34) in tRNA. Catalyzes the FAD-dependent demodification of cmnm(5)s(2)U34 to nm(5)s(2)U34, followed by the transfer of a methyl group from S-adenosyl-L-methionine to nm(5)s(2)U34, to form mnm(5)s(2)U34. The sequence is that of tRNA 5-methylaminomethyl-2-thiouridine biosynthesis bifunctional protein MnmC from Pseudomonas entomophila (strain L48).